Reading from the N-terminus, the 490-residue chain is Glutamyl-tRNA(Gln) amidotransferase subunit A (490 aa).

Active-site charge relay system residues include Lys78 and Ser153. Catalysis depends on Ser177, which acts as the Acyl-ester intermediate.

It belongs to the amidase family. GatA subfamily. As to quaternary structure, heterotrimer of A, B and C subunits.

It catalyses the reaction L-glutamyl-tRNA(Gln) + L-glutamine + ATP + H2O = L-glutaminyl-tRNA(Gln) + L-glutamate + ADP + phosphate + H(+). Allows the formation of correctly charged Gln-tRNA(Gln) through the transamidation of misacylated Glu-tRNA(Gln) in organisms which lack glutaminyl-tRNA synthetase. The reaction takes place in the presence of glutamine and ATP through an activated gamma-phospho-Glu-tRNA(Gln). The chain is Glutamyl-tRNA(Gln) amidotransferase subunit A from Bdellovibrio bacteriovorus (strain ATCC 15356 / DSM 50701 / NCIMB 9529 / HD100).